Reading from the N-terminus, the 266-residue chain is UPF0354 protein lwe1624 (266 aa).

It belongs to the UPF0354 family.

This is UPF0354 protein lwe1624 from Listeria welshimeri serovar 6b (strain ATCC 35897 / DSM 20650 / CCUG 15529 / CIP 8149 / NCTC 11857 / SLCC 5334 / V8).